The following is a 336-amino-acid chain: 4-hydroxy-3-methylbut-2-enyl diphosphate reductase (336 aa).

Residue Cys21 participates in [4Fe-4S] cluster binding. The (2E)-4-hydroxy-3-methylbut-2-enyl diphosphate site is built by His50 and His86. Positions 50 and 86 each coordinate dimethylallyl diphosphate. Positions 50 and 86 each coordinate isopentenyl diphosphate. Position 108 (Cys108) interacts with [4Fe-4S] cluster. His136 provides a ligand contact to (2E)-4-hydroxy-3-methylbut-2-enyl diphosphate. His136 lines the dimethylallyl diphosphate pocket. His136 serves as a coordination point for isopentenyl diphosphate. The active-site Proton donor is the Glu138. Residue Thr177 coordinates (2E)-4-hydroxy-3-methylbut-2-enyl diphosphate. Cys207 contacts [4Fe-4S] cluster. (2E)-4-hydroxy-3-methylbut-2-enyl diphosphate-binding residues include Ser235, Ser236, Asn237, and Ser280. The dimethylallyl diphosphate site is built by Ser235, Ser236, Asn237, and Ser280. 4 residues coordinate isopentenyl diphosphate: Ser235, Ser236, Asn237, and Ser280.

This sequence belongs to the IspH family. [4Fe-4S] cluster is required as a cofactor.

It catalyses the reaction isopentenyl diphosphate + 2 oxidized [2Fe-2S]-[ferredoxin] + H2O = (2E)-4-hydroxy-3-methylbut-2-enyl diphosphate + 2 reduced [2Fe-2S]-[ferredoxin] + 2 H(+). The enzyme catalyses dimethylallyl diphosphate + 2 oxidized [2Fe-2S]-[ferredoxin] + H2O = (2E)-4-hydroxy-3-methylbut-2-enyl diphosphate + 2 reduced [2Fe-2S]-[ferredoxin] + 2 H(+). It functions in the pathway isoprenoid biosynthesis; dimethylallyl diphosphate biosynthesis; dimethylallyl diphosphate from (2E)-4-hydroxy-3-methylbutenyl diphosphate: step 1/1. The protein operates within isoprenoid biosynthesis; isopentenyl diphosphate biosynthesis via DXP pathway; isopentenyl diphosphate from 1-deoxy-D-xylulose 5-phosphate: step 6/6. Functionally, catalyzes the conversion of 1-hydroxy-2-methyl-2-(E)-butenyl 4-diphosphate (HMBPP) into a mixture of isopentenyl diphosphate (IPP) and dimethylallyl diphosphate (DMAPP). Acts in the terminal step of the DOXP/MEP pathway for isoprenoid precursor biosynthesis. In Mesorhizobium japonicum (strain LMG 29417 / CECT 9101 / MAFF 303099) (Mesorhizobium loti (strain MAFF 303099)), this protein is 4-hydroxy-3-methylbut-2-enyl diphosphate reductase.